The following is a 338-amino-acid chain: Taste receptor type 2 member 39 (338 aa).

At 1-30 (MLGRCFPPDTKEKQQLRMTKLCDPAESELS) the chain is on the extracellular side. The chain crosses the membrane as a helical span at residues 31-51 (PFLITLILAVLLAEYLIGIIA). The Cytoplasmic portion of the chain corresponds to 52 to 74 (NGFIMAIHAAEWVQNKAVSTSGR). Residues 75 to 95 (ILVFLSVSRIALQSLMMLEIT) traverse the membrane as a helical segment. The Extracellular segment spans residues 96-116 (ISSTSLSFYSEDAVYYAFKIS). A helical transmembrane segment spans residues 117–137 (FIFLNFCSLWFAAWLSFFYFV). Residues 138–156 (KIANFSYPLFLKLRWRITG) are Cytoplasmic-facing. The helical transmembrane segment at 157-177 (LIPWLLWLSVFISFSHSMFCI) threads the bilayer. Over 178-205 (NICTVYCNNSFPIHSSNSTKKTYLSEIN) the chain is Extracellular. N-linked (GlcNAc...) asparagine glycosylation is found at Asn-185 and Asn-194. Residues 206–226 (VVGLAFFFNLGIVTPLIMFIL) traverse the membrane as a helical segment. The Cytoplasmic segment spans residues 227–262 (TATLLILSLKRHTLHMGSNATGSNDPSMEAHMGAIK). A helical transmembrane segment spans residues 263 to 283 (AISYFLILYIFNAVALFIYLS). At 284-291 (NMFDINSL) the chain is on the extracellular side. A helical transmembrane segment spans residues 292-312 (WNNLCQIIMAAYPAGHSILPI). The Cytoplasmic segment spans residues 313–338 (QDNPGLRRAWKRLQLRLHLYPKEWTL).

Belongs to the G-protein coupled receptor T2R family.

The protein resides in the membrane. In terms of biological role, receptor that may play a role in the perception of bitterness and is gustducin-linked. May play a role in sensing the chemical composition of the gastrointestinal content. The activity of this receptor may stimulate alpha gustducin, mediate PLC-beta-2 activation and lead to the gating of TRPM5. This is Taste receptor type 2 member 39 (TAS2R39) from Pan paniscus (Pygmy chimpanzee).